Consider the following 186-residue polypeptide: ADP-ribosylation factor-like protein 8B (186 aa).

Position 1 is an N-acetylmethionine (Met-1). The segment at residues Met-1–Glu-19 is an intramembrane region (note=Mediates targeting to membranes). Residues Gln-29–Thr-35, Asp-71–Gln-75, and Asn-130–Asp-133 each bind GTP. A Glycyl lysine isopeptide (Lys-Gly) (interchain with G-Cter in ubiquitin) cross-link involves residue Lys-141.

Belongs to the small GTPase superfamily. Arf family. Interacts with tubulin. Interacts with BORCS5; recruits ARL8B to lysosomes. Interacts with VPS41; the interaction mediates the recruitment of the HOPS complex to lysosomes. Interacts (GTP-bound form) with PLEKHM2 (via RUN domain); the interaction is required to recruit the motor protein kinesin-1 on lysosomes. Interacts (GTP-bound form) with PLEKHM1 (via RUN domain); the interaction is required for PLEKHM1 localization to lysosomes and for ARL8B function in delivery and degradation of endocytic and autophagic cargo in lysosomes. PLEKHM1 and PLEKHM2 compete for interaction with ARL8B. Interacts (GTP-bound form) with RUFY1; the interaction is required for RUFY1 endosomal location. When GTP-bound, interacts with RUFY3 and RUFY4, but not with RUFY1, nor RUFY2. In terms of processing, ubiquitinated at Lys-141 by RNF167, leading to its degradation. In terms of tissue distribution, ubiquitously expressed.

It localises to the late endosome membrane. The protein resides in the lysosome membrane. It is found in the cytoplasm. Its subcellular location is the cytoskeleton. The protein localises to the spindle. It localises to the cell projection. The protein resides in the axon. It is found in the synapse. Its subcellular location is the cytolytic granule membrane. The protein localises to the early endosome membrane. It carries out the reaction GTP + H2O = GDP + phosphate + H(+). Its function is as follows. Small GTPase which cycles between active GTP-bound and inactive GDP-bound states. In its active state, binds to a variety of effector proteins playing a key role in the regulation of lysosomal positioning which is important for nutrient sensing, natural killer cell-mediated cytotoxicity and antigen presentation. Along with its effectors, orchestrates lysosomal transport and fusion. Localizes specifically to lysosomal membranes and mediates anterograde lysosomal motility by recruiting PLEKHM2, which in turn recruits the motor protein kinesin-1 on lysosomes. Required for lysosomal and cytolytic granule exocytosis. Critical factor involved in NK cell-mediated cytotoxicity. Drives the polarization of cytolytic granules and microtubule-organizing centers (MTOCs) toward the immune synapse between effector NK lymphocytes and target cells. In neurons, mediates the anterograde axonal long-range transport of presynaptic lysosome-related vesicles required for presynaptic biogenesis and synaptic function. Also acts as a regulator of endosome to lysosome trafficking pathways of special significance for host defense. Recruits RUFY1 onto early endosomes regulating endosomes to trans-Golgi network proteins retrieval. Regulates cargo trafficking to lysosomes by binding to PLEKHM1 and recruiting the HOPS subunit VPS41, resulting in functional assembly of the HOPS complex on lysosomal membranes. Plays an important role in cargo delivery to lysosomes for antigen presentation and microbial killing. Directs the intersection of CD1d with lipid antigens in lysosomes, and plays a role in intersecting phagosomes with lysosomes to generate phagolysosomes that kill microbes. Involved in the process of MHC II presentation. Regulates the delivery of antigens to lysosomes and the formation of MHC II-peptide complexes through the recruitment of the HOPS complex to lysosomes allowing the fusion of late endosomes to lysosomes. May play a role in chromosome segregation. In terms of biological role, (Microbial infection) During Mycobacterium tuberculosis (Mtb) infection, is required for plasma membrane repair by controlling the exocytosis of lysosomes in macrophages. ARL8B secretion pathway is crucial to control the type of cell death of the M.tuberculosis-infected macrophages, distinguishing avirulent from virulent Mtb induced necrotic cell death. Functionally, (Microbial infection) During infection, coronaviruses such as SARS-CoV-2 and the chaperone HSPA5/GRP78 are probably co-released through ARL8B-dependent lysosomal exocytic pathway for unconventional egress. The polypeptide is ADP-ribosylation factor-like protein 8B (Homo sapiens (Human)).